The sequence spans 161 residues: Nucleotide-binding protein XOO0647 (161 aa).

Belongs to the YajQ family.

Its function is as follows. Nucleotide-binding protein. The chain is Nucleotide-binding protein XOO0647 from Xanthomonas oryzae pv. oryzae (strain MAFF 311018).